The primary structure comprises 238 residues: Small ribosomal subunit protein uS2c (238 aa).

Belongs to the universal ribosomal protein uS2 family.

Its subcellular location is the plastid. The protein resides in the chloroplast. This Oltmannsiellopsis viridis (Marine flagellate) protein is Small ribosomal subunit protein uS2c (rps2).